The primary structure comprises 507 residues: ATP synthase subunit alpha, chloroplastic (507 aa).

170–177 lines the ATP pocket; the sequence is GDRQTGKT. A Phosphothreonine modification is found at Thr-257.

Belongs to the ATPase alpha/beta chains family. In terms of assembly, F-type ATPases have 2 components, CF(1) - the catalytic core - and CF(0) - the membrane proton channel. CF(1) has five subunits: alpha(3), beta(3), gamma(1), delta(1), epsilon(1). CF(0) has four main subunits: a, b, b' and c.

Its subcellular location is the plastid. It localises to the chloroplast thylakoid membrane. It carries out the reaction ATP + H2O + 4 H(+)(in) = ADP + phosphate + 5 H(+)(out). Functionally, produces ATP from ADP in the presence of a proton gradient across the membrane. The alpha chain is a regulatory subunit. The polypeptide is ATP synthase subunit alpha, chloroplastic (Capsella bursa-pastoris (Shepherd's purse)).